Consider the following 525-residue polypeptide: Squalene epoxidase 3 (525 aa).

The chain crosses the membrane as a helical span at residues 9-29 (HCILTTTFVASLFAFLLLYVL). Residues 64 to 65 (VA), 84 to 85 (ER), Arg92, Arg163, Val179, Asp341, and Met354 each bind FAD. Transmembrane regions (helical) follow at residues 452-472 (LVLH…VPLP) and 477-497 (LWLG…IIKA).

Belongs to the squalene monooxygenase family. FAD serves as cofactor. Expressed in seedlings, leaves, stems, inflorescences and siliques.

It localises to the membrane. It catalyses the reaction squalene + reduced [NADPH--hemoprotein reductase] + O2 = (S)-2,3-epoxysqualene + oxidized [NADPH--hemoprotein reductase] + H2O + H(+). It participates in terpene metabolism; lanosterol biosynthesis; lanosterol from farnesyl diphosphate: step 2/3. Functionally, catalyzes the stereospecific oxidation of squalene to (S)-2,3-epoxysqualene, and is considered to be a rate-limiting enzyme in steroid biosynthesis. Can produce not only oxidosqualene, but also 2,3:22,23-dioxidosqualene. The chain is Squalene epoxidase 3 (SQE3) from Arabidopsis thaliana (Mouse-ear cress).